Here is a 291-residue protein sequence, read N- to C-terminus: Insulin-like growth factor-binding protein 3 (291 aa).

An N-terminal signal peptide occupies residues 1 to 27; the sequence is MLRARPALWAAALTALTLLRGPPAARA. The tract at residues 28-134 is IGF-binding; it reads GAGTMGAGPV…LRPYLLPSAS (107 aa). One can recognise an IGFBP N-terminal domain in the interval 36 to 119; the sequence is PVVRCEPCDA…LDGRGLCANA (84 aa). Disulfide bonds link Cys-40-Cys-69, Cys-43-Cys-71, Cys-51-Cys-72, Cys-60-Cys-75, Cys-83-Cys-96, and Cys-90-Cys-116. Asn-118 and Asn-136 each carry an N-linked (GlcNAc...) asparagine glycan. Disordered regions lie at residues 132 to 162 and 177 to 211; these read SASGNGSESEEDHSMGSTENQAGPSTHRVPV and KGHAKDSQRYKVDYESQSTDTQNFSSESKRETEYG. Polar residues predominate over residues 146-155; it reads MGSTENQAGP. The residue at position 148 (Ser-148) is a Phosphoserine. A compositionally biased stretch (basic and acidic residues) spans 177 to 190; sequence KGHAKDSQRYKVDY. Residues 191 to 202 are compositionally biased toward polar residues; sequence ESQSTDTQNFSS. A glycan (N-linked (GlcNAc...) asparagine) is linked at Asn-199. Ser-201 is subject to Phosphoserine. Residues 210–285 enclose the Thyroglobulin type-1 domain; the sequence is YGPCRREMED…DVKGKGDVHC (76 aa). Disulfide bonds link Cys-213–Cys-240, Cys-251–Cys-262, and Cys-264–Cys-285.

As to quaternary structure, interacts with XLKD1. Binds IGF2 more than IGF1. Forms a ternary complex of about 140 to 150 kDa with IGF1 or IGF2 and a 85 kDa glycoprotein (ALS). Interacts with humanin; humanin competes with importin KPNB1 for binding to IGFBP3, blocking IGFBP3 nuclear import and IGFBP3-mediated apoptosis. Interacts with TMEM219. Interacts with RXRA; this interaction modulates the transcriptional activity of RXRA. Interacts with LRP1; this interaction mediates cell growth inhibition independent of IGF1. Phosphorylated by FAM20C in the extracellular medium. Phosphorylated by CK2; resulting in decreased nuclear localization. In terms of tissue distribution, plasma; expressed by most tissues.

It localises to the secreted. The protein localises to the nucleus. Multifunctional protein that plays a critical role in regulating the availability of IGFs such as IGF1 and IGF2 to their receptors and thereby regulates IGF-mediated cellular processes including proliferation, differentiation, and apoptosis in a cell-type specific manner. Also exhibits IGF-independent antiproliferative and apoptotic effects mediated by its receptor TMEM219/IGFBP-3R. Inhibits the positive effect of humanin on insulin sensitivity. Promotes testicular germ cell apoptosis. Acts via LRP-1/alpha2M receptor, also known as TGF-beta type V receptor, to mediate cell growth inhibition independent of IGF1. Mechanistically, induces serine-specific dephosphorylation of IRS1 or IRS2 upon ligation to its receptor, leading to the inhibitory cascade. In the nucleus, interacts with transcription factors such as retinoid X receptor-alpha/RXRA to regulate transcriptional signaling and apoptosis. The protein is Insulin-like growth factor-binding protein 3 (IGFBP3) of Bos taurus (Bovine).